Consider the following 314-residue polypeptide: NF-kappa-B inhibitor alpha (314 aa).

The segment at 1–41 (MFQPAEPGQEWAMEGPRDALKKERLLDDRHDSGLDSMKDEE) is disordered. Residues 15–41 (GPRDALKKERLLDDRHDSGLDSMKDEE) are compositionally biased toward basic and acidic residues. A Glycyl lysine isopeptide (Lys-Gly) (interchain with G-Cter in SUMO); alternate cross-link involves residue Lys21. Residue Lys21 forms a Glycyl lysine isopeptide (Lys-Gly) (interchain with G-Cter in ubiquitin); alternate linkage. Lys22 is covalently cross-linked (Glycyl lysine isopeptide (Lys-Gly) (interchain with G-Cter in ubiquitin)). Positions 30 to 36 (HDSGLDS) match the Destruction motif motif. Ser32 bears the Phosphoserine; by IKKA and IKKB mark. Ser36 is modified (phosphoserine; by IKKA, IKKB, IKKE and TBK1). Tyr42 carries the post-translational modification Phosphotyrosine; by Tyr-kinases. The Nuclear export signal motif lies at 45-54 (MVKELREIRL). Residues 110 to 120 (LQQTPLHLAVI) carry the Nuclear import signal motif. 4 ANK repeats span residues 110–139 (LQQTPLHLAVITNQPEIAEALLEAGCDPEL), 143–172 (RGNTPLHLACEQGCLASVGVLTQPRGTQHL), 182–211 (NGHTCLHLASIHGYLGIVELLVSLGADVNA), and 216–245 (NGRTALHLAVDLQNPDLVSLLLKCGADVNR). (3S)-3-hydroxyasparagine; by HIF1AN is present on residues Asn210 and Asn244. Ser283 and Ser288 each carry phosphoserine; by CK2. Phosphothreonine; by CK2 is present on Thr291. Ser293 carries the phosphoserine; by CK2 modification. A Phosphothreonine modification is found at Thr296.

It belongs to the NF-kappa-B inhibitor family. In terms of assembly, interacts with RELA; the interaction requires the nuclear import signal. Part of a 70-90 kDa complex at least consisting of CHUK, IKBKB, NFKBIA, RELA, ELP1 and MAP3K14. Interacts with NKIRAS1 and NKIRAS2. Interacts with RWDD3; the interaction enhances sumoylation. Interacts with PRMT2. Interacts with PRKACA in platelets; this interaction is disrupted by thrombin and collagen. Interacts with MEFV. Interacts with DDRGK1; positively regulates NFKBIA phosphorylation and degradation. Interacts with HNRNPA2B1; the interaction may be mediated by the RRM2 domain of HNRNPA2B1, and HNRNPA2B1 may interact simultaneously with FAM76B and either NFKBIA or NFKBIE to form a complex. Phosphorylated at Ser-32 and Ser-36 by IKKA/CHUK and IKKB/IKBKB; disables inhibition of NF-kappa-B DNA-binding activity. Phosphorylation at positions 32 and 36 is prerequisite to recognition by the SCF(FBXW11) and SCF(BTRC) complexes, leading to polyubiquitination and subsequent degradation. Post-translationally, polyubiquitinated at Lys-21 and/or Lys-22 following phosphorylation at Ser-32 and Ser-36. Monoubiquitinated at Lys-21 and/or Lys-22 by UBE2D3. Ubiquitin chain elongation is then performed by CDC34 in cooperation with the SCF(FBXW11) E3 ligase complex, building ubiquitin chains from the UBE2D3-primed NFKBIA-linked ubiquitin. The resulting polyubiquitination leads to protein degradation. Also ubiquitinated by the SCF(BTRC) complex following stimulus-dependent phosphorylation at Ser-32 and Ser-36. Deubiquitinated by USP38, leading to NF-kappa-B inhibition. In terms of processing, sumoylated; sumoylation requires the presence of the nuclear import signal. Sumoylation blocks ubiquitination and proteasome-mediated degradation of the protein thereby increasing the protein stability. Hydroxylated by HIF1AN.

The protein localises to the cytoplasm. It localises to the nucleus. Functionally, inhibits the activity of dimeric NF-kappa-B/REL complexes by trapping REL (RELA/p65 and NFKB1/p50) dimers in the cytoplasm by masking their nuclear localization signals. On cellular stimulation by immune and pro-inflammatory responses, becomes phosphorylated promoting ubiquitination and degradation, enabling the dimeric RELA to translocate to the nucleus and activate transcription. This Sus scrofa (Pig) protein is NF-kappa-B inhibitor alpha (NFKBIA).